A 711-amino-acid polypeptide reads, in one-letter code: Ferric reductase transmembrane component 3 (711 aa).

The first 20 residues, 1 to 20, serve as a signal peptide directing secretion; the sequence is MYWVLLCGSILLCCLSGASA. Over 21-166 the chain is Extracellular; that stretch reads SPAKTKMYGK…YANYDIGHTY (146 aa). N-linked (GlcNAc...) asparagine glycans are attached at residues asparagine 85, asparagine 108, asparagine 120, and asparagine 134. A helical transmembrane segment spans residues 167–187; the sequence is GGIICAYFVGVMILASILHYL. The Cytoplasmic segment spans residues 188-237; it reads SYTPFKTALFKQRLVRYVRRYLTIPTIWGKHASSFSYLKIFTGFLPTRSE. The helical transmembrane segment at 238-258 threads the bilayer; that stretch reads GVIILGYLVLHTVFLAYGYQY. The Extracellular segment spans residues 259 to 280; that stretch reads DPYNLIFDSRREQIARYVADRS. In terms of domain architecture, Ferric oxidoreductase spans 280 to 414; that stretch reads SGVLAFAHFP…SGIEWIYAAI (135 aa). A helical membrane pass occupies residues 281 to 301; the sequence is GVLAFAHFPLIALFAGRNNFL. Residues 302–321 are Cytoplasmic-facing; it reads EFISGVKYTSFIMFHKWLGR. Heme is bound by residues histidine 316 and histidine 330. The chain crosses the membrane as a helical span at residues 322-341; the sequence is MMFLDAVIHGAAYTSYSVFY. The Extracellular segment spans residues 342 to 353; sequence KDWAASKEETYW. A helical membrane pass occupies residues 354–374; it reads QFGVAALCIVGVMVFFSLAMF. At 375–376 the chain is on the cytoplasmic side; the sequence is RK. The helical transmembrane segment at 377–397 threads the bilayer; the sequence is FFYEAFLFLHIVLGALFFYTC. Residue histidine 386 participates in heme binding. A topological domain (extracellular) is located at residue tryptophan 398. A helical membrane pass occupies residues 399–419; sequence EHVVELSGIEWIYAAIAIWTI. Histidine 400 contributes to the heme binding site. The region spanning 415-534 is the FAD-binding FR-type domain; that stretch reads AIWTIDRLIR…EGPYGSSSPV (120 aa). At 420-711 the chain is on the cytoplasmic side; it reads DRLIRIVRVS…IEYFEEYQSW (292 aa). FAD is bound at residue 479–485; it reads HPFTVLD. NADP(+)-binding positions include 526–529 and 677–678; these read GPYG and CG.

Belongs to the ferric reductase (FRE) family. Requires FAD as cofactor. It depends on heme as a cofactor.

It is found in the cell membrane. It catalyses the reaction 2 a Fe(II)-siderophore + NADP(+) + H(+) = 2 a Fe(III)-siderophore + NADPH. In terms of biological role, siderophore-iron reductase responsible for reducing extracellular iron prior to import. Catalyzes the reductive uptake of Fe(3+) bound to di- and trihydroxamate siderophores. Fe(3+) is reduced to Fe(2+), which then dissociates from the siderophore and can be imported by the high-affinity Fe(2+) transport complex in the plasma membrane. The sequence is that of Ferric reductase transmembrane component 3 (FRE3) from Saccharomyces cerevisiae (strain ATCC 204508 / S288c) (Baker's yeast).